A 79-amino-acid polypeptide reads, in one-letter code: Acyl carrier protein (79 aa).

The Carrier domain occupies 2 to 77 (SEVADKVKKI…DAVEYIEKQK (76 aa)). Residue S37 is modified to O-(pantetheine 4'-phosphoryl)serine.

It belongs to the acyl carrier protein (ACP) family. 4'-phosphopantetheine is transferred from CoA to a specific serine of apo-ACP by AcpS. This modification is essential for activity because fatty acids are bound in thioester linkage to the sulfhydryl of the prosthetic group.

The protein resides in the cytoplasm. The protein operates within lipid metabolism; fatty acid biosynthesis. Functionally, carrier of the growing fatty acid chain in fatty acid biosynthesis. The chain is Acyl carrier protein from Granulibacter bethesdensis (strain ATCC BAA-1260 / CGDNIH1).